A 332-amino-acid polypeptide reads, in one-letter code: Acetyl-coenzyme A carboxylase carboxyl transferase subunit alpha (332 aa).

A CoA carboxyltransferase C-terminal domain is found at 44 to 298 (QLESRAQNLR…KETLVNNLEE (255 aa)).

Belongs to the AccA family. Acetyl-CoA carboxylase is a heterohexamer composed of biotin carboxyl carrier protein (AccB), biotin carboxylase (AccC) and two subunits each of ACCase subunit alpha (AccA) and ACCase subunit beta (AccD).

The protein localises to the cytoplasm. It carries out the reaction N(6)-carboxybiotinyl-L-lysyl-[protein] + acetyl-CoA = N(6)-biotinyl-L-lysyl-[protein] + malonyl-CoA. The protein operates within lipid metabolism; malonyl-CoA biosynthesis; malonyl-CoA from acetyl-CoA: step 1/1. Its function is as follows. Component of the acetyl coenzyme A carboxylase (ACC) complex. First, biotin carboxylase catalyzes the carboxylation of biotin on its carrier protein (BCCP) and then the CO(2) group is transferred by the carboxyltransferase to acetyl-CoA to form malonyl-CoA. The sequence is that of Acetyl-coenzyme A carboxylase carboxyl transferase subunit alpha from Crocosphaera subtropica (strain ATCC 51142 / BH68) (Cyanothece sp. (strain ATCC 51142)).